The following is a 365-amino-acid chain: Peptide chain release factor 2 (365 aa).

Residue glutamine 252 is modified to N5-methylglutamine.

This sequence belongs to the prokaryotic/mitochondrial release factor family. In terms of processing, methylated by PrmC. Methylation increases the termination efficiency of RF2.

It localises to the cytoplasm. Its function is as follows. Peptide chain release factor 2 directs the termination of translation in response to the peptide chain termination codons UGA and UAA. In Pseudoalteromonas translucida (strain TAC 125), this protein is Peptide chain release factor 2.